Consider the following 223-residue polypeptide: Putative germin-like protein 2-2 (223 aa).

The signal sequence occupies residues 1–28; it reads MAAVGACFLQQLAVVALLALWCSHGAIA. A disulfide bridge connects residues Cys38 and Cys53. Positions 67–217 constitute a Cupin type-1 domain; sequence SGLHMAGNTT…AFQVDKNIID (151 aa). 2 N-linked (GlcNAc...) asparagine glycosylation sites follow: Asn74 and Asn82. Residues His115, His117, Glu122, and His163 each contribute to the Mn(2+) site. N-linked (GlcNAc...) asparagine glycosylation occurs at Asn168.

The protein belongs to the germin family. As to quaternary structure, oligomer (believed to be a pentamer but probably hexamer).

The protein localises to the secreted. It localises to the extracellular space. The protein resides in the apoplast. May play a role in plant defense. Probably has no oxalate oxidase activity even if the active site is conserved. This Oryza sativa subsp. japonica (Rice) protein is Putative germin-like protein 2-2.